The primary structure comprises 130 residues: Gonadotropin subunit beta-1 (130 aa).

An N-terminal signal peptide occupies residues 1–18 (MRMHFVVMVMLLPALMMA). Cystine bridges form between Cys-26–Cys-74, Cys-40–Cys-89, Cys-51–Cys-105, Cys-55–Cys-107, and Cys-110–Cys-117. The N-linked (GlcNAc...) asparagine glycan is linked to Asn-30.

It belongs to the glycoprotein hormones subunit beta family. In terms of assembly, heterodimer of an alpha and a beta chain.

It is found in the secreted. In terms of biological role, involved in gametogenesis and steroidogenesis. The protein is Gonadotropin subunit beta-1 (cgba) of Cyprinus carpio (Common carp).